The sequence spans 2057 residues: Rho guanine nucleotide exchange factor 17 (2057 aa).

Disordered regions lie at residues 20-361 (ERWS…DTGG), 375-461 (LASP…SNPD), and 481-559 (RVRK…LKPS). Ser-142 and Ser-152 each carry phosphoserine. Residues 227-249 (ARASSSSSIASSYPVSRSRAASS) are compositionally biased toward low complexity. Phosphoserine is present on residues Ser-305 and Ser-308. Positions 314–323 (GGLGSAGGVG) are enriched in gly residues. A phosphoserine mark is found at Ser-324, Ser-330, Ser-377, Ser-381, Ser-389, Ser-404, and Ser-414. Positions 382 to 391 (RGSSRYSSTE) are enriched in polar residues. Positions 440–451 (PLRDGGLDLDKN) are enriched in basic and acidic residues. Ser-456 carries the phosphoserine modification. Positions 507 to 524 (EQSESTLSQSPTSPTTRP) are enriched in low complexity. Ser-538 and Ser-611 each carry phosphoserine. Disordered regions lie at residues 615–647 (AGDM…PEPL) and 663–952 (LSST…VRHA). Over residues 663 to 672 (LSSTSAQTNH) the composition is skewed to polar residues. Phosphoserine is present on Ser-689. Thr-692 and Thr-695 each carry phosphothreonine. Residues 710–719 (PNGTELSNGE) show a composition bias toward polar residues. A Phosphoserine modification is found at Ser-728. Over residues 747-760 (SVDSNLLGSLNSKT) the composition is skewed to polar residues. Residues 820–829 (SLSDPSRRGE) show a composition bias toward basic and acidic residues. Ser-906 carries the post-translational modification Phosphoserine. Over residues 909–920 (LTRRGSKKRPAR) the composition is skewed to basic residues. The span at 922 to 931 (SHQELRREEG) shows a compositional bias: basic and acidic residues. The span at 933–944 (QDQTGSLTQTRS) shows a compositional bias: polar residues. Ser-953 and Ser-994 each carry phosphoserine. Residues 1015–1027 (GPVDLPCLPPSAP) show a composition bias toward pro residues. The interval 1015–1054 (GPVDLPCLPPSAPPSTETKPSGAARATPDEPAPASKCCSK) is disordered. The 189-residue stretch at 1059–1247 (MRKHVTMTLL…KQVAERINKG (189 aa)) folds into the DH domain. Phosphoserine is present on Ser-1324. Disordered regions lie at residues 1555-1713 (RCPR…SSRG) and 1983-2050 (CSTP…DSTN). A compositionally biased stretch (acidic residues) spans 1579–1589 (LDVEATAEEEA). The span at 1638–1674 (SPSPSGTLQSQASQSTISSSFGNEETPSSKEATAETT) shows a compositional bias: low complexity.

In terms of biological role, acts as a guanine nucleotide exchange factor (GEF) for RhoA GTPases. This Mus musculus (Mouse) protein is Rho guanine nucleotide exchange factor 17 (Arhgef17).